The following is a 372-amino-acid chain: MTELKHTPLHATHRALNARMVDFGGWDMPVNYGSQIEEHRAVRTDAGMFDVSHMCVVDFTGERVRAFFERALANNVGKLQTAGKALYSCLLNPQGGVIDDLIVYYFGEDHFRVVVNAGTAEKDIAWFNKLNDEEGFGLTITPRRDYAIVAVQGPNAREKVWATVPHARAASEALKPFNAARVADTPFGELTVARTGYTGEDGFEIIVPAAHVEALWNALQAQGVRPAGLGARDTLRLEAGMNLYGQDMDDDVSPLDAGLAWTVDLSAPREFIGRAKLEADGSKQSFVGLILHKDNGKAAGVLRAHQKVVTPNGEGEITSGTFSPTMQESIAFARVPKGVQPGDVVHVQIRDKALPASVVKLPFVRNGKVLVG.

Belongs to the GcvT family. In terms of assembly, the glycine cleavage system is composed of four proteins: P, T, L and H.

It carries out the reaction N(6)-[(R)-S(8)-aminomethyldihydrolipoyl]-L-lysyl-[protein] + (6S)-5,6,7,8-tetrahydrofolate = N(6)-[(R)-dihydrolipoyl]-L-lysyl-[protein] + (6R)-5,10-methylene-5,6,7,8-tetrahydrofolate + NH4(+). In terms of biological role, the glycine cleavage system catalyzes the degradation of glycine. In Paraburkholderia phymatum (strain DSM 17167 / CIP 108236 / LMG 21445 / STM815) (Burkholderia phymatum), this protein is Aminomethyltransferase.